A 758-amino-acid chain; its full sequence is MGRRLSVWLCTVAALLSGAQAKGTPLLARPAQPSASRYSLYTTGWRPRLRPGPHKSLCAYVVHRNVTCVLQEGAESYIKAEYRNCGWGPNCPSTVRYRTVFRPRYKIGYKTVTDLAWRCCPGLTGESCPEHLTDHGATPPHQEPEPQIPLGQLGPGPRPSPYSREAPRPRGRKGQGPFGERLEQRLSQAYGTLSGLVASHENPNRITGDSRAPVVPIGFGVIPEGLVAPEDRGRGPLIPPLSEILSKVTEVSNTLQTKVQLLDEVRGLALGHEAHLQRLREAPPSPLTSLALLEEYVDQRLQRLWGSLLDGFEQKLQGVQSECDLRVQEVRQQCEEGQAASQRLHQSLDGRELALRRELSQLGTQLQGLTLTGGGTCCSQLALISARVDSLERNLQAVTETQGGPGTLAADELARLSAAMLQGGVDGLLEGLETINGTENGARGCCLRMEVGGWGVGGFGSTLEQRVQSLEERLATLTGELSPESAIPDRSARPLVHSELAVLEQRLVSLETSCTPSTTTAILDNLVAEVKAWQSRSEALLHQVARHTALLQQLNGTVAEVQGQLAEGTGSSLQGEITLLKVNLNSVSKSLTGLSDSVSQYSDAFSAANTSLDERERRVEAEVHTIQEQISSQGSRLQAGHRQVLNLRGELEQLKAGMANVARGLSRCRDTAQELQHTVGHFDQRVAQVEGACERLGLLATHLNSLPTEQLRSREGLWGHIDKLNHTLAQHTQDIARLRDDLLDCRAQLAEVRPGRAD.

The first 21 residues, 1–21 (MGRRLSVWLCTVAALLSGAQA), serve as a signal peptide directing secretion. Positions 54 to 130 (HKSLCAYVVH…PGLTGESCPE (77 aa)) constitute an EMI domain. Cystine bridges form between Cys-58–Cys-120, Cys-85–Cys-91, and Cys-119–Cys-128. N-linked (GlcNAc...) asparagine glycosylation occurs at Asn-65. The segment at 131 to 178 (HLTDHGATPPHQEPEPQIPLGQLGPGPRPSPYSREAPRPRGRKGQGPF) is disordered. The stretch at 379-401 (SQLALISARVDSLERNLQAVTET) forms a coiled coil. Asn-436 carries an N-linked (GlcNAc...) asparagine glycan. Coiled coils occupy residues 460–483 (GSTL…ELSP) and 528–567 (AEVK…QLAE). Residues Asn-555 and Asn-609 are each glycosylated (N-linked (GlcNAc...) asparagine). Coiled coils occupy residues 642–677 (RQVL…ELQH) and 720–753 (HIDK…AEVR). Asn-725 carries N-linked (GlcNAc...) asparagine glycosylation.

The protein resides in the secreted. It is found in the extracellular space. It localises to the extracellular matrix. The protein localises to the cytoplasm. The polypeptide is EMILIN-3 (Emilin3) (Mus musculus (Mouse)).